Reading from the N-terminus, the 378-residue chain is MNRIERILEGFDPVSNGLDEDFVLTKLTGMKGCGCKVPRNVLLQLLQTFKTDLVINNDEVDIGLDSCVIPLRHPGLRLVQTTDFFYPLIDDPYIMGRVTCANVLSDLYAMGVSECDNMLMLLAVAIDLNEKQRDIVVPLFIQGFKDAADEAGTKIRGGQTVRCPWLLLGGVATSVAHESEIIKVDQAVPGDVLILTKPIGGQVAVNSYEWIKKKNGKIEELNLEIPKIEKAFKQVCEQMSRLNRNAAKLLHKYDAHSSTDVTGFGLLGHAENLARVQKQPMEFIIEKLPIIEYMDEIADKMIAKGGEGFKLYQGTSAETSGGLLIAMSEENAKKYIAELSSLDNAPAWIIGKVTAKTTDSSIARILPDAVRISVPSHI.

Residue Cys-33 is part of the active site. ATP contacts are provided by residues Lys-36, 63 to 65 (GLD), Asp-83, Asp-106, and 158 to 160 (GQT). Position 65 (Asp-65) interacts with Mg(2+). Position 106 (Asp-106) interacts with Mg(2+). Asp-260 contributes to the Mg(2+) binding site.

This sequence belongs to the selenophosphate synthase 1 family. Class I subfamily. In terms of assembly, homodimer. It depends on Mg(2+) as a cofactor.

The enzyme catalyses hydrogenselenide + ATP + H2O = selenophosphate + AMP + phosphate + 2 H(+). In terms of biological role, synthesizes selenophosphate from selenide and ATP. In Caenorhabditis elegans, this protein is Probable selenide, water dikinase (seld-1).